We begin with the raw amino-acid sequence, 284 residues long: Diaminopimelate epimerase (284 aa).

Positions 13 and 66 each coordinate substrate. C75 functions as the Proton donor in the catalytic mechanism. Residues 76-77 (GN), N166, N199, and 217-218 (ER) contribute to the substrate site. C226 serves as the catalytic Proton acceptor. A substrate-binding site is contributed by 227-228 (GT).

The protein belongs to the diaminopimelate epimerase family. Homodimer.

It is found in the cytoplasm. It catalyses the reaction (2S,6S)-2,6-diaminopimelate = meso-2,6-diaminopimelate. Its pathway is amino-acid biosynthesis; L-lysine biosynthesis via DAP pathway; DL-2,6-diaminopimelate from LL-2,6-diaminopimelate: step 1/1. Its function is as follows. Catalyzes the stereoinversion of LL-2,6-diaminopimelate (L,L-DAP) to meso-diaminopimelate (meso-DAP), a precursor of L-lysine and an essential component of the bacterial peptidoglycan. This chain is Diaminopimelate epimerase, found in Halothermothrix orenii (strain H 168 / OCM 544 / DSM 9562).